The primary structure comprises 490 residues: 23S rRNA (uracil(1939)-C(5))-methyltransferase RlmD (490 aa).

The TRAM domain maps to Ala14–Ala75. 4 residues coordinate [4Fe-4S] cluster: Cys88, Cys98, Cys101, and Cys180. S-adenosyl-L-methionine-binding residues include Gln289, Phe318, Asn323, Glu339, Asn374, and Asp395. Cys446 (nucleophile) is an active-site residue.

This sequence belongs to the class I-like SAM-binding methyltransferase superfamily. RNA M5U methyltransferase family. RlmD subfamily.

The enzyme catalyses uridine(1939) in 23S rRNA + S-adenosyl-L-methionine = 5-methyluridine(1939) in 23S rRNA + S-adenosyl-L-homocysteine + H(+). Catalyzes the formation of 5-methyl-uridine at position 1939 (m5U1939) in 23S rRNA. In Polaromonas naphthalenivorans (strain CJ2), this protein is 23S rRNA (uracil(1939)-C(5))-methyltransferase RlmD.